Reading from the N-terminus, the 75-residue chain is DNA-directed RNA polymerase subunit omega (75 aa).

The protein belongs to the RNA polymerase subunit omega family. In terms of assembly, in cyanobacteria the RNAP catalytic core is composed of 2 alpha, 1 beta, 1 beta', 1 gamma and 1 omega subunit. When a sigma factor is associated with the core the holoenzyme is formed, which can initiate transcription.

It catalyses the reaction RNA(n) + a ribonucleoside 5'-triphosphate = RNA(n+1) + diphosphate. In terms of biological role, promotes RNA polymerase assembly. Latches the N- and C-terminal regions of the beta' subunit thereby facilitating its interaction with the beta and alpha subunits. This chain is DNA-directed RNA polymerase subunit omega, found in Picosynechococcus sp. (strain ATCC 27264 / PCC 7002 / PR-6) (Agmenellum quadruplicatum).